A 160-amino-acid polypeptide reads, in one-letter code: Transcription antitermination protein NusB (160 aa).

The protein belongs to the NusB family.

Involved in transcription antitermination. Required for transcription of ribosomal RNA (rRNA) genes. Binds specifically to the boxA antiterminator sequence of the ribosomal RNA (rrn) operons. This is Transcription antitermination protein NusB from Sinorhizobium fredii (strain NBRC 101917 / NGR234).